Consider the following 741-residue polypeptide: Hemolysin (741 aa).

Positions 1-25 (MPKLNRCAIAIFTILSAISSPTLLA) are cleaved as a signal peptide. A propeptide spanning residues 26–157 (NINEPSGEAA…RSGFASPAPA (132 aa)) is cleaved from the precursor. 3 disulfides stabilise this stretch: Cys-182/Cys-200, Cys-497/Cys-511, and Cys-537/Cys-549. Residues 484-575 (RPVNLQLASF…LTNVYSGESL (92 aa)) form the Ricin B-type lectin domain. The tract at residues 607 to 741 (NAQESSPILG…LVKGVQFDLN (135 aa)) is beta-prism domain.

It belongs to the HlyA hemolysin family. Monomer. Homoheptamer. After binding to target membranes the protein assembles into a heptameric pre-pore complex. Proteolytic cleavage triggers a conformation change that is required for membrane insertion and pore formation. In terms of processing, proteolytical cleavage is required to convert the 80 kDa hemolysin precursor into the active 65 kDa hemolysin.

The protein resides in the secreted. The protein localises to the host cell membrane. Bacterial hemolysin that causes cytolysis by forming heptameric pores in target host membranes. This is Hemolysin (hlyA) from Vibrio cholerae serotype O1 (strain ATCC 39315 / El Tor Inaba N16961).